The primary structure comprises 102 residues: NADH-quinone oxidoreductase subunit K (102 aa).

A run of 3 helical transmembrane segments spans residues 6–26 (MEHGLLLAAALFCIGLCGLLI), 30–50 (LLYILMSIEIMMNASALAFVV), and 65–85 (ILVISLAAAEASIGLALLLLL).

This sequence belongs to the complex I subunit 4L family. NDH-1 is composed of 13 different subunits. Subunits NuoA, H, J, K, L, M, N constitute the membrane sector of the complex.

It is found in the cell inner membrane. It catalyses the reaction a quinone + NADH + 5 H(+)(in) = a quinol + NAD(+) + 4 H(+)(out). Its function is as follows. NDH-1 shuttles electrons from NADH, via FMN and iron-sulfur (Fe-S) centers, to quinones in the respiratory chain. The immediate electron acceptor for the enzyme in this species is believed to be ubiquinone. Couples the redox reaction to proton translocation (for every two electrons transferred, four hydrogen ions are translocated across the cytoplasmic membrane), and thus conserves the redox energy in a proton gradient. This chain is NADH-quinone oxidoreductase subunit K, found in Shewanella oneidensis (strain ATCC 700550 / JCM 31522 / CIP 106686 / LMG 19005 / NCIMB 14063 / MR-1).